Reading from the N-terminus, the 1682-residue chain is Cilia- and flagella-associated protein 43 (1682 aa).

6 WD repeats span residues 168 to 207, 262 to 305, 315 to 354, 358 to 397, 488 to 527, and 697 to 738; these read NPGMDVSQMSFNPMNWHQMCLSSSSAMSVWTIERSNQEHH, PKDD…VTVL, DGAPLINPLTLVYQKDGILASGIDGVIYSFIIKDSKYQVK, EFDGPVTHLVFSPSYKMLLIQTDKGSVYIYTFGAEMPLDK, LSQSPVKIVTYDQRGIFLLVGTEEGNIFVIDARPSKSFQI, and SHQG…ANIA. Residues 767 to 790 form a disordered region; that stretch reads RESTNEQQEETTESQKHLNSDSSE. Coiled-coil stretches lie at residues 926–960 and 1171–1223; these read KERTEEELQELSKVMQQKKTEIECLKLRKEIVEVQ and SEDE…HLKR.

The protein belongs to the CFAP43 family. Expressed in testis. Expressed in the lung, brain, oviduct and nasal cavity.

The protein resides in the cell projection. Its subcellular location is the cilium. The protein localises to the flagellum. It is found in the cytoplasm. It localises to the cytoskeleton. The protein resides in the flagellum axoneme. Its subcellular location is the cilium axoneme. Flagellar protein involved in sperm flagellum axoneme organization and function. Involved in the regulation of the beating frequency of motile cilia on the epithelial cells of the respiratory tract. This Mus musculus (Mouse) protein is Cilia- and flagella-associated protein 43.